The following is a 408-amino-acid chain: BTB/POZ and MATH domain-containing protein 3 (408 aa).

Positions 24–158 (NGSHQFTIQG…DDCLVINCTV (135 aa)) constitute an MATH domain. The 68-residue stretch at 194–261 (CDIAFQVGDE…IYTDVLPNVH (68 aa)) folds into the BTB domain.

Belongs to the Tdpoz family. In terms of assembly, homodimer or heterodimer with BPM3 and BPM5. Interacts with CUL3A and CUL3B. Interacts with RAP2-4 and RAP2-13. Binds to MYB56 at the promoter of FLOWERING LOCUS T (FT). In terms of tissue distribution, ubiquitous.

Its subcellular location is the nucleus. The protein localises to the cytoplasm. Its pathway is protein modification; protein ubiquitination. Functionally, may act as a substrate-specific adapter of an E3 ubiquitin-protein ligase complex (CUL3-RBX1-BTB) which mediates the ubiquitination and subsequent proteasomal degradation of target proteins. In Arabidopsis thaliana (Mouse-ear cress), this protein is BTB/POZ and MATH domain-containing protein 3.